Here is a 488-residue protein sequence, read N- to C-terminus: MIQVLLVTICLAVFPYQGSSIILESGNVNDYEVVYPRKVTALPKGAVQLKYEDAMQYEFKVNGEPVVLHLEKNKGLFSEDYSETHYSPDGREITTYPPVEDHCYYHGRIQNDADSTASISACNGLKGHFKLQGEMYLIEPLKLSDSEAHAVYKYENVEKEDEASKMCGVTETNWESYEPIKKASQSNIPPEEEAFYQRYIELVVVADHRMYTKYDGDKTEISSIIYEIVNTLTQIFRPLHIRVALIGLEIWSSGELSKVTLSADDTLEAFGEWRKTVLMNRKRHDNAQLLTGMIFNETIEGRTYKSGMCNPKHSVGIVRDYRTRRHFVANRMAHELGHNLGIDHDRDSCTCGANSCIMSATVSNEPSSQFSDCSLNKYLNYIVRYQSTTRCLHNEPSETDIVSPPFCGNYFKEVGEDCDCGPPANCQNPCCDAATCKLTTGSQCAEGLCCDQCKFTKKGTACRPARGDWNDDTCTGQSADCPRNGLYG.

The N-terminal stretch at 1–20 is a signal peptide; the sequence is MIQVLLVTICLAVFPYQGSS. The propeptide occupies 21-191; that stretch reads IILESGNVND…KASQSNIPPE (171 aa). Positions 198 to 396 constitute a Peptidase M12B domain; it reads RYIELVVVAD…STTRCLHNEP (199 aa). 2 residues coordinate Ca(2+): E201 and D285. The N-linked (GlcNAc...) asparagine glycan is linked to N296. Cystine bridges form between C309–C391, C349–C373, and C351–C356. H334 lines the Zn(2+) pocket. Residue E335 is part of the active site. The Zn(2+) site is built by H338 and H344. Ca(2+)-binding residues include C391, N394, N409, E413, E416, and D419. One can recognise a Disintegrin domain in the interval 404-488; that stretch reads PPFCGNYFKE…ADCPRNGLYG (85 aa). 7 cysteine pairs are disulfide-bonded: C407–C426, C418–C436, C420–C431, C430–C453, C444–C450, C449–C474, and C462–C481. The Cell attachment site signature appears at 466-468; sequence RGD.

Belongs to the venom metalloproteinase (M12B) family. P-II subfamily. P-IIb sub-subfamily. In terms of assembly, homodimer; disulfide-linked (disintegrin). It depends on Zn(2+) as a cofactor. In terms of tissue distribution, expressed by the venom gland.

The protein resides in the secreted. Its function is as follows. Zinc metalloproteinase-disintegrin VMP-II: inhibits ADP-induced platelet aggregation (probably by binding integrin alpha-IIb/beta-3 (ITGA2B/ITGB3)) and degrades fibrinogen. Recombinant disintegrin r-Cam-dis (413-488): this recombinant protein inhibits platelet adhesion to fibrinogen (IC(50) is 1 nM), inhibits collagen- (IC(50) is 18 nM) and ADP-induced (IC(50) is 6 nM) platelet aggregation, and also inhibits platelet function on clot retraction. May act by binding integrin alpha-IIb/beta-3 (ITGA2B/ITGB3). The polypeptide is Zinc metalloproteinase-disintegrin VMP-II (Crotalus adamanteus (Eastern diamondback rattlesnake)).